A 254-amino-acid polypeptide reads, in one-letter code: Segregation and condensation protein A (254 aa).

Belongs to the ScpA family. As to quaternary structure, component of a cohesin-like complex composed of ScpA, ScpB and the Smc homodimer, in which ScpA and ScpB bind to the head domain of Smc. The presence of the three proteins is required for the association of the complex with DNA.

Its subcellular location is the cytoplasm. In terms of biological role, participates in chromosomal partition during cell division. May act via the formation of a condensin-like complex containing Smc and ScpB that pull DNA away from mid-cell into both cell halves. The polypeptide is Segregation and condensation protein A (Clostridium tetani (strain Massachusetts / E88)).